Consider the following 492-residue polypeptide: Probable ATP-citrate synthase subunit 2 (492 aa).

Ser-24 is subject to Phosphoserine.

The protein in the N-terminal section; belongs to the succinate/malate CoA ligase beta subunit family. This sequence in the C-terminal section; belongs to the succinate/malate CoA ligase alpha subunit family. As to quaternary structure, composed of two subunits.

The protein resides in the cytoplasm. Its subcellular location is the nucleus. The enzyme catalyses oxaloacetate + acetyl-CoA + ADP + phosphate = citrate + ATP + CoA. ATP citrate-lyase is the primary enzyme responsible for the synthesis of cytosolic acetyl-CoA. Has a central role in de novo lipid synthesis. In Schizosaccharomyces pombe (strain 972 / ATCC 24843) (Fission yeast), this protein is Probable ATP-citrate synthase subunit 2.